The primary structure comprises 66 residues: Toxin Tppa1 (66 aa).

An LCN-type CS-alpha/beta domain is found at 1–63 (KDGYLVGNDG…TWSRSTNRCG (63 aa)). Cystine bridges form between Cys11–Cys62, Cys15–Cys37, Cys23–Cys43, and Cys27–Cys45.

The protein belongs to the long (4 C-C) scorpion toxin superfamily. Sodium channel inhibitor family. Beta subfamily. As to expression, expressed by the venom gland.

It is found in the secreted. Functionally, beta toxins bind voltage-independently at site-4 of sodium channels (Nav) and shift the voltage of activation toward more negative potentials thereby affecting sodium channel activation and promoting spontaneous and repetitive firing. The protein is Toxin Tppa1 of Tityus pachyurus (Colombian scorpion).